A 281-amino-acid chain; its full sequence is Lectin CaBo (281 aa).

A signal peptide spans 1–29; the sequence is MAISKKSSLYLPIFTFITMLLMVVNKVSS. Asp-119 lines the Ca(2+) pocket. A carbohydrate is bound at residue Arg-139. Residues 149–163 constitute a propeptide, removed in mature form; it reads IIKNSTTIDFNAAYN. Residues Glu-171 and Asp-173 each coordinate Mn(2+). Positions 173, 175, 177, and 182 each coordinate Ca(2+). Tyr-175 contributes to the a carbohydrate binding site. The Mn(2+) site is built by Asp-182 and His-187. 262–263 contributes to the a carbohydrate binding site; sequence LY.

The protein belongs to the leguminous lectin family. As to quaternary structure, equilibrium between homodimer and homotetramer. In terms of processing, the mature chain consists of residues 164-281 followed by residues 30-148. Concanavalin A-like lectins of the Diocleinae subtribe undergo proteolytic processing referred to as circular permutation. The propeptide is split into an N-terminal and a C-terminal part, the gamma and beta chain, respectively. These are then religated in beta-gamma order to form the mature alpha chain. The beta and gamma chains can often be detected in cell extracts.

In terms of biological role, D-mannose-specific lectin. This is Lectin CaBo from Canavalia bonariensis.